The sequence spans 98 residues: Ribonuclease kappa (98 aa).

The next 2 helical transmembrane spans lie at 13-33 and 65-85; these read ACGI…GIFF and VSYN…FSFC.

Belongs to the RNase K family. As to quaternary structure, interacts with the proton translocation complex V0 of the V-ATPase. Interacts with ATP6AP1.

Its subcellular location is the endomembrane system. It localises to the cytoplasmic vesicle. The protein resides in the clathrin-coated vesicle membrane. Functionally, endoribonuclease which preferentially cleaves ApU and ApG phosphodiester bonds. Hydrolyzes UpU bonds at a lower rate. Regulates the activity of vacuolar (H+)-ATPase (V-ATPase) which is responsible for acidifying and maintaining the pH of intracellular compartments. Required at an early stage of receptor-mediated endocytosis. This Mus musculus (Mouse) protein is Ribonuclease kappa (Rnasek).